The primary structure comprises 169 residues: Peptide deformylase (169 aa).

Cys-91 and His-133 together coordinate Fe cation. Glu-134 is an active-site residue. His-137 serves as a coordination point for Fe cation.

This sequence belongs to the polypeptide deformylase family. The cofactor is Fe(2+).

It catalyses the reaction N-terminal N-formyl-L-methionyl-[peptide] + H2O = N-terminal L-methionyl-[peptide] + formate. In terms of biological role, removes the formyl group from the N-terminal Met of newly synthesized proteins. Requires at least a dipeptide for an efficient rate of reaction. N-terminal L-methionine is a prerequisite for activity but the enzyme has broad specificity at other positions. This chain is Peptide deformylase, found in Salmonella agona (strain SL483).